We begin with the raw amino-acid sequence, 500 residues long: MSTQEEMEERLLREGSDAEGQSNNRESIYLRTKVWSEVNKMWRIALPSSLFRMTSFGSIIVAQAFIGHSSELGLAAYALLQSTFIRFLYGLMGGMSSATETLCGQAYGAEQYHTMGIYLQRSWIVDMAVTTLFLPFIVLAGPILRLLGQNVEITKTVDEIYPWMIPYVYSLIFTMTIQMYLQAQMRNAIVGVLSTLSLALDLVVTWWCVSVMGMGIGGALLGLNVGSWAMVLAEFVYIFGGWCPFTWTGFSIAAFVDLIPMLKLSISSGFMICLEYWYMSILVLMAGYTKDAKIAISAFSICQYIYTWELNICLGFLGAACVRVANELGKGDAHAVRFSIKVILTISTLMGVIFSALCLAFCGRISYLFSNSDEVSDAVNDLSVILAVSILLNSIQPILSGVAVGAGMQSIVAVVNLASYYAIGIPLGLILTYVFHLGVKGLWSGMLAGIAIQTIILCYIIYKTDWELEVKRTCERMKVWSLKPSNEESNPIIREESRSK.

The interval 1-20 (MSTQEEMEERLLREGSDAEG) is disordered. The next 12 membrane-spanning stretches (helical) occupy residues 48–67 (SSLF…AFIG), 72–92 (LGLA…YGLM), 124–144 (IVDM…GPIL), 160–180 (IYPW…IQMY), 188–208 (AIVG…TWWC), 225–245 (VGSW…WCPF), 266–286 (ISSG…VLMA), 298–318 (AFSI…GFLG), 342–362 (VILT…LAFC), 384–404 (VILA…GVAV), 411–431 (IVAV…GLIL), and 441–461 (GLWS…CYII).

It belongs to the multi antimicrobial extrusion (MATE) (TC 2.A.66.1) family.

Its subcellular location is the membrane. The protein is Protein DETOXIFICATION 24 of Arabidopsis thaliana (Mouse-ear cress).